The following is a 260-amino-acid chain: Exosome complex component Rrp4 (260 aa).

One can recognise an S1 motif domain in the interval 59 to 128 (NDVVIGVVIV…SSMKIELALR (70 aa)). One can recognise a KH domain in the interval 136 to 194 (RTGQIVEVEPVKVPRVIGHGGSMISMLKKETNCSIFVGQNGRIWIDGKDEDIELLSKAL).

It belongs to the RRP4 family. As to quaternary structure, component of the archaeal exosome complex. Forms a trimer of Rrp4 and/or Csl4 subunits. The trimer associates with a hexameric ring-like arrangement composed of 3 Rrp41-Rrp42 heterodimers.

It is found in the cytoplasm. Non-catalytic component of the exosome, which is a complex involved in RNA degradation. Increases the RNA binding and the efficiency of RNA degradation. Confers strong poly(A) specificity to the exosome. This Methanosarcina mazei (strain ATCC BAA-159 / DSM 3647 / Goe1 / Go1 / JCM 11833 / OCM 88) (Methanosarcina frisia) protein is Exosome complex component Rrp4.